The following is a 533-amino-acid chain: Glucose-6-phosphate isomerase (533 aa).

The active-site Proton donor is E322. Residues H351 and K455 contribute to the active site.

The protein belongs to the GPI family.

It is found in the cytoplasm. It carries out the reaction alpha-D-glucose 6-phosphate = beta-D-fructose 6-phosphate. The protein operates within carbohydrate biosynthesis; gluconeogenesis. Its pathway is carbohydrate degradation; glycolysis; D-glyceraldehyde 3-phosphate and glycerone phosphate from D-glucose: step 2/4. Functionally, catalyzes the reversible isomerization of glucose-6-phosphate to fructose-6-phosphate. The sequence is that of Glucose-6-phosphate isomerase from Desulfitobacterium hafniense (strain Y51).